A 147-amino-acid polypeptide reads, in one-letter code: Hemoglobin subunit beta (147 aa).

Val2 bears the N-acetylvaline mark. Positions 3–147 constitute a Globin domain; that stretch reads HLSGEEKSAV…VANALAHKYH (145 aa). Thr13 carries the phosphothreonine modification. Position 45 is a phosphoserine (Ser45). Position 60 is an N6-acetyllysine (Lys60). His64 lines the heme b pocket. Lys83 is subject to N6-acetyllysine. A heme b-binding site is contributed by His93. Residue Cys94 is modified to S-nitrosocysteine. Lys145 is modified (N6-acetyllysine).

This sequence belongs to the globin family. Heterotetramer of two alpha chains and two beta chains. Red blood cells.

In terms of biological role, involved in oxygen transport from the lung to the various peripheral tissues. This Lepus europaeus (European hare) protein is Hemoglobin subunit beta (HBB).